Here is a 492-residue protein sequence, read N- to C-terminus: Bifunctional purine biosynthesis protein PurH (492 aa).

The region spanning Met-1–Val-144 is the MGS-like domain.

It belongs to the PurH family.

The catalysed reaction is (6R)-10-formyltetrahydrofolate + 5-amino-1-(5-phospho-beta-D-ribosyl)imidazole-4-carboxamide = 5-formamido-1-(5-phospho-D-ribosyl)imidazole-4-carboxamide + (6S)-5,6,7,8-tetrahydrofolate. It catalyses the reaction IMP + H2O = 5-formamido-1-(5-phospho-D-ribosyl)imidazole-4-carboxamide. It participates in purine metabolism; IMP biosynthesis via de novo pathway; 5-formamido-1-(5-phospho-D-ribosyl)imidazole-4-carboxamide from 5-amino-1-(5-phospho-D-ribosyl)imidazole-4-carboxamide (10-formyl THF route): step 1/1. It functions in the pathway purine metabolism; IMP biosynthesis via de novo pathway; IMP from 5-formamido-1-(5-phospho-D-ribosyl)imidazole-4-carboxamide: step 1/1. The sequence is that of Bifunctional purine biosynthesis protein PurH from Staphylococcus epidermidis (strain ATCC 35984 / DSM 28319 / BCRC 17069 / CCUG 31568 / BM 3577 / RP62A).